The chain runs to 428 residues: L-fucose-proton symporter (428 aa).

A run of 12 helical transmembrane segments spans residues 10–30 (FIVPFVLITSLFALWGFANDI), 51–71 (LVQLAFYGGYGTMAIPAALFA), 78–98 (AGILLGLALYAIGAFLFWPAA), 100–120 (YEIFNFFLVSLYILTFGLAFL), 147–167 (FNPLGSITGMFVASQLVLTNL), 204–224 (IALGFVVVAVFIIIGLKKMPA), 250–270 (EGVIAQAFYVGVQIMCWTFIV), 288–308 (IIAMAIFISSRFISTALMKYL), 311–331 (EFMLMLFAIGGFLSILGVIFI), 339–359 (CLILTSGFMPLMFPTIYGIAL), 371–391 (AGLVMAIVGGALMPPLQGMII), and 401–421 (AVNFSFILPLICFVVIAIYGF).

This sequence belongs to the major facilitator superfamily. FHS transporter (TC 2.A.1.7) family.

The protein localises to the cell inner membrane. It carries out the reaction L-fucose(in) + H(+)(in) = L-fucose(out) + H(+)(out). Functionally, mediates the uptake of L-fucose across the boundary membrane with the concomitant transport of protons into the cell (symport system). The polypeptide is L-fucose-proton symporter (fucP) (Haemophilus influenzae (strain ATCC 51907 / DSM 11121 / KW20 / Rd)).